A 554-amino-acid polypeptide reads, in one-letter code: MPSVDDVLEQVGEFGWFQKQAFLNLCLTSVAFAPIYVGIVFLGFTPDHRCRSPGVAELSQRCGWSLAEELNYTVPGLGPAGQAFPRQCRRYEVDWNQSTLGCEDPLAGLAANSSHLPLGPCQYGWVYDTPGSSIVTEFNLVCEAAWKVDLFQSCVNVGFFVGSMGIGYIADRLVGSSASWPPPHQCRLGRPDAVAPDYVSLLVFRLLQGLVSKGSWMAGYTLITEFVGLGYRKTVAILYQTAFSVGLVLLSGLAYAVPHWRSLQLAVSLPIFLLLLCYWFVPESPRWLLSQKRNTQAIKIMDRIAQKNGKLPPADLKMLSLEEEVVTERLSPSFLDLFRTQNLRKYTFILMYLWFTSSVLYQGLIMHVGATGGSLYLDFLYSALVEFPAAFVILLIIDRFGRLYLLAGSNLLAGAACFFMIFISHDLHWLSIVAACIGRMGITIVFQMVCLVSAELYPTFIRNLGVMVCSSLCDLGGVVAPFLVFRLTEVWRGLPLVLFAALGLVAGGMSLLLPETKGVALPETIEEVERLGRKAKPRDNMIYLQVKMPEPAGL.

Topologically, residues 1-24 are cytoplasmic; that stretch reads MPSVDDVLEQVGEFGWFQKQAFLN. Residues 25–45 form a helical membrane-spanning segment; the sequence is LCLTSVAFAPIYVGIVFLGFT. The Extracellular portion of the chain corresponds to 46 to 234; it reads PDHRCRSPGV…EFVGLGYRKT (189 aa). The N-linked (GlcNAc...) asparagine glycan is linked to Asn71. The chain crosses the membrane as a helical span at residues 235–255; it reads VAILYQTAFSVGLVLLSGLAY. At 256–261 the chain is on the cytoplasmic side; the sequence is AVPHWR. The helical transmembrane segment at 262-282 threads the bilayer; that stretch reads SLQLAVSLPIFLLLLCYWFVP. The Proline-rich sequence motif lies at 282–286; sequence PESPR. The Extracellular portion of the chain corresponds to 283 to 347; that stretch reads ESPRWLLSQK…FRTQNLRKYT (65 aa). Ser333 is modified (phosphoserine). Residues 348–368 form a helical membrane-spanning segment; sequence FILMYLWFTSSVLYQGLIMHV. At 369–376 the chain is on the cytoplasmic side; it reads GATGGSLY. Residues 377–397 form a helical membrane-spanning segment; the sequence is LDFLYSALVEFPAAFVILLII. At 398–402 the chain is on the extracellular side; sequence DRFGR. Residues 403 to 423 form a helical membrane-spanning segment; sequence LYLLAGSNLLAGAACFFMIFI. At 424–431 the chain is on the cytoplasmic side; the sequence is SHDLHWLS. The helical transmembrane segment at 432-452 threads the bilayer; sequence IVAACIGRMGITIVFQMVCLV. Residues 453-464 are Extracellular-facing; that stretch reads SAELYPTFIRNL. The helical transmembrane segment at 465–485 threads the bilayer; sequence GVMVCSSLCDLGGVVAPFLVF. At 486–492 the chain is on the cytoplasmic side; sequence RLTEVWR. The chain crosses the membrane as a helical span at residues 493–513; it reads GLPLVLFAALGLVAGGMSLLL. Residues 514–554 are Extracellular-facing; sequence PETKGVALPETIEEVERLGRKAKPRDNMIYLQVKMPEPAGL.

Belongs to the major facilitator (TC 2.A.1) superfamily. Organic cation transporter (TC 2.A.1.19) family. Phosphorylated.

The protein resides in the basolateral cell membrane. It is found in the apical cell membrane. It localises to the lateral cell membrane. The protein localises to the basal cell membrane. Its subcellular location is the cell membrane. The enzyme catalyses 1-methylnicotinamide(out) = 1-methylnicotinamide(in). It catalyses the reaction dopamine(out) = dopamine(in). The catalysed reaction is serotonin(out) = serotonin(in). It carries out the reaction (R)-adrenaline(out) = (R)-adrenaline(in). The enzyme catalyses (R)-noradrenaline(out) = (R)-noradrenaline(in). It catalyses the reaction histamine(out) = histamine(in). The catalysed reaction is guanidine(out) = guanidine(in). It carries out the reaction choline(out) = choline(in). The enzyme catalyses acetylcholine(in) = acetylcholine(out). It catalyses the reaction thiamine(in) = thiamine(out). The catalysed reaction is spermidine(in) = spermidine(out). It carries out the reaction agmatine(out) = agmatine(in). The enzyme catalyses putrescine(out) = putrescine(in). It catalyses the reaction (R)-carnitine(in) = (R)-carnitine(out). The catalysed reaction is O-isobutanoyl-(R)-carnitine(in) = O-isobutanoyl-(R)-carnitine(out). It carries out the reaction O-acetyl-(R)-carnitine(in) = O-acetyl-(R)-carnitine(out). The enzyme catalyses O-3-hydroxybutanoyl-(R)-carnitine(in) = O-3-hydroxybutanoyl-(R)-carnitine(out). It catalyses the reaction O-propanoyl-(R)-carnitine(in) = O-propanoyl-(R)-carnitine(out). The catalysed reaction is O-butanoyl-(R)-carnitine(in) = O-butanoyl-(R)-carnitine(out). It carries out the reaction O-2-methylbutanoyl-(R)-carnitine(in) = O-2-methylbutanoyl-(R)-carnitine(out). The enzyme catalyses O-3-methylbutanoyl-(R)-carnitine(in) = O-3-methylbutanoyl-(R)-carnitine(out). It catalyses the reaction O-hexanoyl-(R)-carnitine(in) = O-hexanoyl-(R)-carnitine(out). The catalysed reaction is L-histidyl-L-proline diketopiperazine(in) = L-histidyl-L-proline diketopiperazine(out). It carries out the reaction (R)-salsolinol(in) = (R)-salsolinol(out). The enzyme catalyses prostaglandin F2alpha(out) = prostaglandin F2alpha(in). It catalyses the reaction prostaglandin E2(out) = prostaglandin E2(in). Its activity is regulated as follows. Phosphorylation of the transporter leads to changes in its substrate affinity, resulting in a regulation of the transport activity. In contrast with rat ortholog, ASP uptake is inhibited by protein kinase A (PKA) and C (PKC) activation. ASP uptake is also endogenously activated by calmodulin, the calmodulin-dependent kinase II and LCK tyrosine kinase. Inhibited by cGMP, most likely through a cGMP-binding protein that interacts with OCT1. Functionally, electrogenic voltage-dependent transporter that mediates the transport of a variety of organic cations such as endogenous bioactive amines, cationic drugs and xenobiotics. Functions as a pH- and Na(+)-independent, bidirectional transporter. Cation cellular uptake or release is driven by the electrochemical potential (i.e. membrane potential and concentration gradient) and substrate selectivity. Hydrophobicity is a major requirement for recognition in polyvalent substrates and inhibitors. Primarily expressed in the basolateral membrane of hepatocytes and proximal tubules and involved in the uptake and disposition of cationic compounds from the blood by hepatic and renal clearance. Most likely functions as an uptake carrier in enterocytes contributing to the intestinal elimination of organic cations from the systemic circulation. Transports endogenous monoamines such as N-1-methylnicotinamide (NMN), guanidine, neurotransmitters dopamine, serotonin, noradrenaline, adrenaline and histamine, and quaternary ammonium compound such as choline. Also transports natural polyamines such as spermidine, agmatine and putrescine at low affinity, but relatively high turnover. Involved in the hepatic and intestinal uptake of the vitamin B1/thiamine, hence regulating hepatic lipid and energy metabolism. Contributes to the influx and efflux of fatty acid carriers carnitines and acylcarnitines across the basolateral membrane of hepatocytes, from the liver to the systemic circulation and inversely and may be involved in regulating the systemic availability of hepatic acylcarnitines. Also capable of transporting non-amine endogenous compounds such as prostaglandin E2 (PGE2) and prostaglandin F2-alpha (PGF2-alpha). May contribute to the transport of cationic compounds in testes across the blood-testis-barrier. Also mediates the uptake of xenobiotics tributylmethylammonium (TBuMA), quinidine, N-methyl-quinine (NMQ), N-methyl-quinidine (NMQD) N-(4,4-azo-n-pentyl)-quinuclidine (APQ), azidoprocainamide methoiodide (AMP), N-(4,4-azo-n-pentyl)-21-deoxyajmalinium (APDA) and 4-(4-(dimethylamino)styryl)-N-methylpyridinium (ASP). This Sus scrofa (Pig) protein is Solute carrier family 22 member 1 (SLC22A1).